Consider the following 328-residue polypeptide: MFIIKSILYRLIQMIVVLFVISTLAFILMKLSPGNPVDKILHLDVAQVSTEQINATKDKLGLNDSLLVQWWHWMNHLLHFNLGKSFESKEPVTQILFNYAPITLLISFSTLVVSLCISIPLGIIAAKRFHKLSDKVIRVISTLSISLPAFFIGIILLFIVTNLMNIDSVILSQFILPVLTLSLGMCAYIIRLVRSNLLILLKSNIVQASRLRGMNERYILIHDLLKPTILPIIPLLGISLGSLIGGTVVIENLFDIPGIGYLLMDSIKSRDYPVIQGCVLFIGFFVVIINTIADLLTLLLDPKQRLQLGNPKNKTNTPLISESSDRHA.

6 helical membrane passes run 11–31 (LIQM…LMKL), 104–124 (LLIS…LGII), 139–159 (VIST…LLFI), 170–190 (ILSQ…AYII), 229–249 (ILPI…GTVV), and 279–299 (VLFI…LTLL). Residues 100 to 297 (APITLLISFS…IINTIADLLT (198 aa)) enclose the ABC transmembrane type-1 domain.

Belongs to the binding-protein-dependent transport system permease family. OppBC subfamily. In terms of assembly, the complex is composed of two ATP-binding proteins (NikD and NikE), two transmembrane proteins (NikB and NikC) and a solute-binding protein (NikA).

It is found in the cell membrane. In terms of biological role, part of the ABC transporter complex NikABCDE (Opp2) involved in nickel import. Probably responsible for the translocation of the substrate across the membrane. The sequence is that of Nickel import system permease protein NikB from Staphylococcus aureus (strain MRSA252).